The primary structure comprises 382 residues: Bifunctional enzyme IspD/IspF (382 aa).

The segment at 1 to 225 (MTFSVVIVAA…EHLAGVARVT (225 aa)) is 2-C-methyl-D-erythritol 4-phosphate cytidylyltransferase. The segment at 226 to 382 (RVGQGFDAHR…SAVVAVETPA (157 aa)) is 2-C-methyl-D-erythritol 2,4-cyclodiphosphate synthase. The a divalent metal cation site is built by Asp232 and His234. 4-CDP-2-C-methyl-D-erythritol 2-phosphate contacts are provided by residues 232 to 234 (DAH) and 258 to 259 (HS). His266 provides a ligand contact to a divalent metal cation. Residues 280–282 (DIG), 356–359 (TTTE), Phe363, and Arg366 each bind 4-CDP-2-C-methyl-D-erythritol 2-phosphate.

In the N-terminal section; belongs to the IspD/TarI cytidylyltransferase family. IspD subfamily. This sequence in the C-terminal section; belongs to the IspF family. A divalent metal cation serves as cofactor.

It carries out the reaction 2-C-methyl-D-erythritol 4-phosphate + CTP + H(+) = 4-CDP-2-C-methyl-D-erythritol + diphosphate. The catalysed reaction is 4-CDP-2-C-methyl-D-erythritol 2-phosphate = 2-C-methyl-D-erythritol 2,4-cyclic diphosphate + CMP. It participates in isoprenoid biosynthesis; isopentenyl diphosphate biosynthesis via DXP pathway; isopentenyl diphosphate from 1-deoxy-D-xylulose 5-phosphate: step 2/6. The protein operates within isoprenoid biosynthesis; isopentenyl diphosphate biosynthesis via DXP pathway; isopentenyl diphosphate from 1-deoxy-D-xylulose 5-phosphate: step 4/6. In terms of biological role, bifunctional enzyme that catalyzes the formation of 4-diphosphocytidyl-2-C-methyl-D-erythritol from CTP and 2-C-methyl-D-erythritol 4-phosphate (MEP) (IspD), and catalyzes the conversion of 4-diphosphocytidyl-2-C-methyl-D-erythritol 2-phosphate (CDP-ME2P) to 2-C-methyl-D-erythritol 2,4-cyclodiphosphate (ME-CPP) with a corresponding release of cytidine 5-monophosphate (CMP) (IspF). The polypeptide is Bifunctional enzyme IspD/IspF (Caulobacter vibrioides (strain ATCC 19089 / CIP 103742 / CB 15) (Caulobacter crescentus)).